The following is a 212-amino-acid chain: Interleukin-6 (212 aa).

An N-terminal signal peptide occupies residues 1 to 27 (MNSFSTSAFGPVAFSLGLLLVLPAAFP). A disulfide bond links C72 and C78. Residue N73 is glycosylated (N-linked (GlcNAc...) asparagine). S81 carries the post-translational modification Phosphoserine. A disulfide bridge links C101 with C111. The N-linked (GlcNAc...) asparagine glycan is linked to N172.

It belongs to the IL-6 superfamily. Component of a hexamer of two molecules each of IL6, IL6R and IL6ST; first binds to IL6R to associate with the signaling subunit IL6ST. Interacts with IL6R (via the N-terminal ectodomain); this interaction may be affected by IL6R-binding with SORL1, hence decreasing IL6 cis signaling. Interacts with SORL1 (via the N-terminal ectodomain); this interaction leads to IL6 internalization and lysosomal degradation. May form a trimeric complex with the soluble SORL1 ectodomain and soluble IL6R receptor; this interaction might stabilize circulating IL6, hence promoting IL6 trans signaling.

The protein resides in the secreted. Its function is as follows. Cytokine with a wide variety of biological functions in immunity, tissue regeneration, and metabolism. Binds to IL6R, then the complex associates to the signaling subunit IL6ST/gp130 to trigger the intracellular IL6-signaling pathway. The interaction with the membrane-bound IL6R and IL6ST stimulates 'classic signaling', whereas the binding of IL6 and soluble IL6R to IL6ST stimulates 'trans-signaling'. Alternatively, 'cluster signaling' occurs when membrane-bound IL6:IL6R complexes on transmitter cells activate IL6ST receptors on neighboring receiver cells. Functionally, IL6 is a potent inducer of the acute phase response. Rapid production of IL6 contributes to host defense during infection and tissue injury, but excessive IL6 synthesis is involved in disease pathology. In the innate immune response, is synthesized by myeloid cells, such as macrophages and dendritic cells, upon recognition of pathogens through toll-like receptors (TLRs) at the site of infection or tissue injury. In the adaptive immune response, is required for the differentiation of B cells into immunoglobulin-secreting cells. Plays a major role in the differentiation of CD4(+) T cell subsets. Essential factor for the development of T follicular helper (Tfh) cells that are required for the induction of germinal-center formation. Required to drive naive CD4(+) T cells to the Th17 lineage. Also required for proliferation of myeloma cells and the survival of plasmablast cells. Acts as an essential factor in bone homeostasis and on vessels directly or indirectly by induction of VEGF, resulting in increased angiogenesis activity and vascular permeability. Induces, through 'trans-signaling' and synergistically with IL1B and TNF, the production of VEGF. Involved in metabolic controls, is discharged into the bloodstream after muscle contraction increasing lipolysis and improving insulin resistance. 'Trans-signaling' in central nervous system also regulates energy and glucose homeostasis. Mediates, through GLP-1, crosstalk between insulin-sensitive tissues, intestinal L cells and pancreatic islets to adapt to changes in insulin demand. Also acts as a myokine. Plays a protective role during liver injury, being required for maintenance of tissue regeneration. Also has a pivotal role in iron metabolism by regulating HAMP/hepcidin expression upon inflammation or bacterial infection. Through activation of IL6ST-YAP-NOTCH pathway, induces inflammation-induced epithelial regeneration. This is Interleukin-6 (IL6) from Macaca mulatta (Rhesus macaque).